We begin with the raw amino-acid sequence, 57 residues long: Probable antitoxin MazE1 (57 aa).

As to quaternary structure, forms a complex with cognate toxin MazF1.

Its function is as follows. Antitoxin component of a type II toxin-antitoxin (TA) system. This chain is Probable antitoxin MazE1 (mazE1), found in Mycobacterium tuberculosis (strain ATCC 25618 / H37Rv).